The sequence spans 488 residues: MPRTRTPLAAIVLAAGKGTRMKSNKAKVLHEVAGRPLAYYPVKRAVELGASPVVVVVGHQAEAVEAALSAALPEAPLRFAVQEQQLGTAHAVLAAKRALRGYRGPVLILSGDTPLLRAETLEAVVSARRRARAAVSLATMTLEAPRGYGRVVRDARGRPARIVEEKDATDAERAVREVNAGLYCVDAELLWKKLAKVGTANAQREFYLTDLVPMAAQAGGVAGVEVPAEEASGVNDRIELARANRVMVGRLAEAFMRAGVTIEDPARFDCDEGVEIGADAVIEPNVRLRGRTRVGARTRVGVGAVITDGVLADGVTVNPYTVISEAKVAEGAILGPFSRLRPGADIGPEAHVGNFVEVKKSRLGKGAKANHLAYLGDAEIGAGANIGAGTITCNYDGERKNPTRIGDGAFIGSDSILVAPIEIGAGAYVAAGSTLTDPVPAGALALGRARQVTKEGWVAQRQAEKQMKGTATGPAPARKGRPAARRAS.

The interval 1–237 is pyrophosphorylase; it reads MPRTRTPLAA…AEEASGVNDR (237 aa). UDP-N-acetyl-alpha-D-glucosamine contacts are provided by residues 13-16, K27, Q82, 87-88, 110-112, G149, E164, N179, and N235; these read LAAG, GT, and SGD. D112 is a Mg(2+) binding site. N235 serves as a coordination point for Mg(2+). Residues 238–258 form a linker region; the sequence is IELARANRVMVGRLAEAFMRA. The interval 259–488 is N-acetyltransferase; sequence GVTIEDPARF…KGRPAARRAS (230 aa). UDP-N-acetyl-alpha-D-glucosamine contacts are provided by R341 and K359. The active-site Proton acceptor is H371. Residues Y374 and N385 each coordinate UDP-N-acetyl-alpha-D-glucosamine. Acetyl-CoA-binding positions include A388, 394 to 395, S413, A431, and R448; that span reads NY. The interval 459 to 488 is disordered; that stretch reads AQRQAEKQMKGTATGPAPARKGRPAARRAS. The segment covering 478–488 has biased composition (basic residues); that stretch reads RKGRPAARRAS.

The protein in the N-terminal section; belongs to the N-acetylglucosamine-1-phosphate uridyltransferase family. It in the C-terminal section; belongs to the transferase hexapeptide repeat family. In terms of assembly, homotrimer. Mg(2+) serves as cofactor.

Its subcellular location is the cytoplasm. The enzyme catalyses alpha-D-glucosamine 1-phosphate + acetyl-CoA = N-acetyl-alpha-D-glucosamine 1-phosphate + CoA + H(+). The catalysed reaction is N-acetyl-alpha-D-glucosamine 1-phosphate + UTP + H(+) = UDP-N-acetyl-alpha-D-glucosamine + diphosphate. The protein operates within nucleotide-sugar biosynthesis; UDP-N-acetyl-alpha-D-glucosamine biosynthesis; N-acetyl-alpha-D-glucosamine 1-phosphate from alpha-D-glucosamine 6-phosphate (route II): step 2/2. It participates in nucleotide-sugar biosynthesis; UDP-N-acetyl-alpha-D-glucosamine biosynthesis; UDP-N-acetyl-alpha-D-glucosamine from N-acetyl-alpha-D-glucosamine 1-phosphate: step 1/1. It functions in the pathway bacterial outer membrane biogenesis; LPS lipid A biosynthesis. In terms of biological role, catalyzes the last two sequential reactions in the de novo biosynthetic pathway for UDP-N-acetylglucosamine (UDP-GlcNAc). The C-terminal domain catalyzes the transfer of acetyl group from acetyl coenzyme A to glucosamine-1-phosphate (GlcN-1-P) to produce N-acetylglucosamine-1-phosphate (GlcNAc-1-P), which is converted into UDP-GlcNAc by the transfer of uridine 5-monophosphate (from uridine 5-triphosphate), a reaction catalyzed by the N-terminal domain. This is Bifunctional protein GlmU from Anaeromyxobacter dehalogenans (strain 2CP-C).